The primary structure comprises 320 residues: Arylacetonitrilase (320 aa).

A CN hydrolase domain is found at Ile-5–Leu-286. Glu-46 functions as the Proton acceptor in the catalytic mechanism. Residue Lys-133 is part of the active site. The active-site Nucleophile is the Cys-178.

The protein belongs to the carbon-nitrogen hydrolase superfamily. Nitrilase family.

It carries out the reaction a nitrile + 2 H2O = a carboxylate + NH4(+). Functionally, nitrilase that hydrolyzes preferentially fumaronitrile, while 3-phenylpropionitrile, beta-cyano-L-alanine and 4-cyanopyridine are transformed at much lower rates. The sequence is that of Arylacetonitrilase (nit) from Trametes versicolor (strain FP-101664) (White-rot fungus).